Here is a 479-residue protein sequence, read N- to C-terminus: Glycogen synthase (479 aa).

An ADP-alpha-D-glucose-binding site is contributed by lysine 15.

Belongs to the glycosyltransferase 1 family. Bacterial/plant glycogen synthase subfamily.

The catalysed reaction is [(1-&gt;4)-alpha-D-glucosyl](n) + ADP-alpha-D-glucose = [(1-&gt;4)-alpha-D-glucosyl](n+1) + ADP + H(+). The protein operates within glycan biosynthesis; glycogen biosynthesis. Synthesizes alpha-1,4-glucan chains using ADP-glucose. In Nostoc punctiforme (strain ATCC 29133 / PCC 73102), this protein is Glycogen synthase.